A 263-amino-acid chain; its full sequence is Endonuclease 8 (263 aa).

Residue Pro-2 is the Schiff-base intermediate with DNA of the active site. The active-site Proton donor is Glu-3. The Proton donor; for beta-elimination activity role is filled by Lys-53. Gln-70, Arg-125, and Asn-169 together coordinate DNA. The segment at Lys-229–His-263 adopts an FPG-type zinc-finger fold. Arg-253 (proton donor; for delta-elimination activity) is an active-site residue.

This sequence belongs to the FPG family. Zn(2+) is required as a cofactor.

The enzyme catalyses 2'-deoxyribonucleotide-(2'-deoxyribose 5'-phosphate)-2'-deoxyribonucleotide-DNA = a 3'-end 2'-deoxyribonucleotide-(2,3-dehydro-2,3-deoxyribose 5'-phosphate)-DNA + a 5'-end 5'-phospho-2'-deoxyribonucleoside-DNA + H(+). Its function is as follows. Involved in base excision repair of DNA damaged by oxidation or by mutagenic agents. Acts as a DNA glycosylase that recognizes and removes damaged bases. Has a preference for oxidized pyrimidines, such as thymine glycol, 5,6-dihydrouracil and 5,6-dihydrothymine. Has AP (apurinic/apyrimidinic) lyase activity and introduces nicks in the DNA strand. Cleaves the DNA backbone by beta-delta elimination to generate a single-strand break at the site of the removed base with both 3'- and 5'-phosphates. In Escherichia coli O7:K1 (strain IAI39 / ExPEC), this protein is Endonuclease 8.